Consider the following 343-residue polypeptide: MAGLKNTSYNAVHWSQLAPEEQIRFWEDYEAGRATTFLVEPERKRTKRRRGEHSTKPKCENPSWYRPERYKALKGQLGHAYNRLVKKDPVTGEQSLRMRMSRHPFYVQKRTFVGRKYAFRPEKQRLLDAIWPVLVSFSDAGTHTVGMSVTRLAEEISPKDSEGHVIPELEVTVSRLSRLLAEQVRFGVLGVSEETMWDREHRQRLPRYVWITPAGWQMLGVDMVKLHEQQQKRLRESEIRQQLIREGVLREDEDISVHAARKRWYLQRSQDALKKRREKAAASKRANRLKKLPVDQQIYEMAEYLRKRLPPDEAYFCSDDHLKRLAIRELRQLELTLAAPPPH.

The interval 42–61 (ERKRTKRRRGEHSTKPKCEN) is disordered.

Binds specifically to the motif 5'-AANCYGCAA-3' (repA box) in the origin of replication. Acts preferentially in cis; binding to the repA boxes is sequential, with the boxes closest to the DnaA binding site being occupied first. It is involved in promoting open complex formation by unwinding the oriB at sequence 5'-TCTTAA-3'. This chain is Replication initiation protein (repA), found in Escherichia coli.